A 262-amino-acid chain; its full sequence is Homeobox protein Nkx-6.3 (262 aa).

The segment at residues 140 to 199 is a DNA-binding region (homeobox); the sequence is KKHTRPTFTGHQIFALEKTFEQTKYLAGPERARLAYSLGMTESQVKVWFQNRRTKWRKKS. The interval 197-237 is disordered; it reads KKSALEPSSSTPRAPGGASGDRAASENEDDEYNKPLDPDSD.

Expressed in the developing CNS and gastro-intestinal tract.

It is found in the nucleus. Putative transcription factor, which may be involved in patterning of central nervous system and pancreas. The polypeptide is Homeobox protein Nkx-6.3 (Nkx6-3) (Mus musculus (Mouse)).